We begin with the raw amino-acid sequence, 572 residues long: Probable inactive glycosyltransferase 25 family member 3 (572 aa).

N-linked (GlcNAc...) asparagine glycosylation is found at Asn-52, Asn-130, Asn-214, and Asn-337. The Prevents secretion from ER motif lies at 569–572; it reads RDEL.

The protein belongs to the glycosyltransferase 25 family.

It localises to the endoplasmic reticulum lumen. Probable cell adhesion protein involved in leukocyte transmigration across the blood-brain barrier. Does not express any beta-galactosyltransferase activity in vitro. This chain is Probable inactive glycosyltransferase 25 family member 3 (Cercam), found in Rattus norvegicus (Rat).